Reading from the N-terminus, the 147-residue chain is 3-dehydroquinate dehydratase (147 aa).

The active-site Proton acceptor is tyrosine 23. Positions 74, 80, and 87 each coordinate substrate. Histidine 100 serves as the catalytic Proton donor. Substrate contacts are provided by residues 101–102 (LS) and arginine 111.

The protein belongs to the type-II 3-dehydroquinase family. Homododecamer.

The enzyme catalyses 3-dehydroquinate = 3-dehydroshikimate + H2O. The protein operates within metabolic intermediate biosynthesis; chorismate biosynthesis; chorismate from D-erythrose 4-phosphate and phosphoenolpyruvate: step 3/7. Functionally, catalyzes a trans-dehydration via an enolate intermediate. The protein is 3-dehydroquinate dehydratase of Clostridium botulinum (strain Kyoto / Type A2).